Consider the following 418-residue polypeptide: Gamma-glutamyl phosphate reductase (418 aa).

It belongs to the gamma-glutamyl phosphate reductase family.

It is found in the cytoplasm. It catalyses the reaction L-glutamate 5-semialdehyde + phosphate + NADP(+) = L-glutamyl 5-phosphate + NADPH + H(+). Its pathway is amino-acid biosynthesis; L-proline biosynthesis; L-glutamate 5-semialdehyde from L-glutamate: step 2/2. In terms of biological role, catalyzes the NADPH-dependent reduction of L-glutamate 5-phosphate into L-glutamate 5-semialdehyde and phosphate. The product spontaneously undergoes cyclization to form 1-pyrroline-5-carboxylate. The chain is Gamma-glutamyl phosphate reductase from Agathobacter rectalis (strain ATCC 33656 / DSM 3377 / JCM 17463 / KCTC 5835 / VPI 0990) (Eubacterium rectale).